The primary structure comprises 911 residues: FIGNL1-interacting regulator of recombination and mitosis (911 aa).

Residues 830–853 (SEKSQPAQTPLTEEPCAKRARQET) form a disordered region. Positions 844–853 (PCAKRARQET) are enriched in basic and acidic residues.

It localises to the chromosome. Its subcellular location is the centromere. The protein localises to the kinetochore. The protein resides in the nucleus. It is found in the midbody. It localises to the cytoplasm. Its subcellular location is the cytoskeleton. The protein localises to the spindle. In terms of biological role, may play a role in chromosome segregation. This chain is FIGNL1-interacting regulator of recombination and mitosis, found in Danio rerio (Zebrafish).